We begin with the raw amino-acid sequence, 252 residues long: tRNA (guanine-N(1)-)-methyltransferase (252 aa).

Residues glycine 113 and 133-138 contribute to the S-adenosyl-L-methionine site; that span reads IGDYVL.

It belongs to the RNA methyltransferase TrmD family. Homodimer.

The protein localises to the cytoplasm. The catalysed reaction is guanosine(37) in tRNA + S-adenosyl-L-methionine = N(1)-methylguanosine(37) in tRNA + S-adenosyl-L-homocysteine + H(+). In terms of biological role, specifically methylates guanosine-37 in various tRNAs. This chain is tRNA (guanine-N(1)-)-methyltransferase, found in Xanthomonas campestris pv. campestris (strain 8004).